The sequence spans 397 residues: L-asparaginase-like protein CG4372 (397 aa).

Positions 1-22 (MLAQSCCLRLLILLLLFTTIGS) are cleaved as a signal peptide. Intrachain disulfides connect cysteine 90-cysteine 95, cysteine 189-cysteine 205, and cysteine 344-cysteine 371.

The protein belongs to the Ntn-hydrolase family.

The chain is L-asparaginase-like protein CG4372 from Drosophila melanogaster (Fruit fly).